The following is a 654-amino-acid chain: Acetyl-coenzyme A synthetase (654 aa).

Residues 190–193 and Thr-313 contribute to the CoA site; that span reads RGGK. ATP-binding positions include 389–391, 413–418, Asp-504, and Arg-519; these read GEP and DTWWQT. Residue Ser-527 participates in CoA binding. Arg-530 is an ATP binding site. 3 residues coordinate Mg(2+): Val-541, His-543, and Val-546. The residue at position 613 (Lys-613) is an N6-acetyllysine.

It belongs to the ATP-dependent AMP-binding enzyme family. Mg(2+) is required as a cofactor. In terms of processing, acetylated. Deacetylation by the SIR2-homolog deacetylase activates the enzyme.

The catalysed reaction is acetate + ATP + CoA = acetyl-CoA + AMP + diphosphate. Its function is as follows. Catalyzes the conversion of acetate into acetyl-CoA (AcCoA), an essential intermediate at the junction of anabolic and catabolic pathways. AcsA undergoes a two-step reaction. In the first half reaction, AcsA combines acetate with ATP to form acetyl-adenylate (AcAMP) intermediate. In the second half reaction, it can then transfer the acetyl group from AcAMP to the sulfhydryl group of CoA, forming the product AcCoA. This chain is Acetyl-coenzyme A synthetase, found in Leptospira biflexa serovar Patoc (strain Patoc 1 / Ames).